Here is a 323-residue protein sequence, read N- to C-terminus: Voltage-dependent calcium channel gamma-2 subunit (323 aa).

The helical transmembrane segment at 10–30 (MLLTTVGAFAAFSLMTIAVGT) threads the bilayer. A glycan (N-linked (GlcNAc...) asparagine) is linked at asparagine 48. Transmembrane regions (helical) follow at residues 104-124 (SSIF…CIAA), 134-154 (IILS…IGII), and 182-202 (FGAL…HMFI). The segment at 233 to 261 (YQRRSRSSSRSTEPSHSRDASPVGIKGFN) is disordered. A Phosphoserine modification is found at serine 253. Tyrosine 271 carries the post-translational modification Phosphotyrosine. A Phosphothreonine modification is found at threonine 321.

This sequence belongs to the PMP-22/EMP/MP20 family. CACNG subfamily. The L-type calcium channel is composed of five subunits: alpha-1, alpha-2/delta, beta and gamma. Interacts with the PDZ domains of DLG4/PSD-95 and DLG1/SAP97. May interact with GOPC. Acts as an auxiliary subunit for AMPA-selective glutamate receptors (AMPARs). Found in a complex with GRIA1, GRIA2, GRIA3, GRIA4, CNIH2, CNIH3, CACNG3, CACNG4, CACNG5, CACNG7 and CACNG8. Interacts with GRIA1 and GRIA2. Interacts with MPP2. Post-translationally, phosphorylation of Thr-321 impairs interaction with DLG1 and DLG4. As to expression, brain.

The protein localises to the membrane. Its subcellular location is the synapse. It is found in the synaptosome. Regulates the trafficking and gating properties of AMPA-selective glutamate receptors (AMPARs). Promotes their targeting to the cell membrane and synapses and modulates their gating properties by slowing their rates of activation, deactivation and desensitization. Does not show subunit-specific AMPA receptor regulation and regulates all AMPAR subunits. Thought to stabilize the calcium channel in an inactivated (closed) state. In Homo sapiens (Human), this protein is Voltage-dependent calcium channel gamma-2 subunit (CACNG2).